We begin with the raw amino-acid sequence, 115 residues long: ATP synthase subunits region ORF 7 (115 aa).

The sequence is that of ATP synthase subunits region ORF 7 from Fuscovulum blasticum (Rhodobacter blasticus).